A 220-amino-acid chain; its full sequence is CRIB domain-containing protein RIC3 (220 aa).

The CRIB domain maps to 28–41; it reads IGFPTDVKHVAHIG. Residues 39–220 are disordered; that stretch reads HIGSDGPATN…CNDNNISDKE (182 aa). Positions 61-77 are enriched in polar residues; that stretch reads NENGQVVSRADANNNQI. Residues 108 to 121 show a composition bias toward low complexity; sequence NGSPPRRNSSASAS. 2 stretches are compositionally biased toward basic residues: residues 127 to 136 and 172 to 184; these read NTRRHHRSRH and HSRKSTSRHRKPK. The segment covering 209–220 has biased composition (polar residues); sequence DTCNDNNISDKE.

In terms of assembly, interacts with ARAC11/ROP1. In terms of tissue distribution, expressed in flowers and pollen.

It localises to the cytoplasm. Functions as a downstream effector of Rho-related GTP binding proteins of the 'Rho of Plants' (ROPs) family. Participates in the propagation of ROP GTPase signals in specific cellular responses. Functions as a downstream effector of ARAC11/ROP1 to activate calcium signaling that leads to F-actin disassembly associated with exocytosis in the tip of the growing pollen tube. Counteracts the ARAC11/ROP1-RIC4 pathway, which promotes apical F-actin assembly associated with vesicle accumulation, to control actin dynamics and pollen tube apical growth. This Arabidopsis thaliana (Mouse-ear cress) protein is CRIB domain-containing protein RIC3 (RIC3).